The sequence spans 459 residues: MKSSGKPLAAPKVGMVSLGCPKALVDSEQIITQLRAEGYEISGTYDGADLVVVNTCGFIDEAVQESLDAIGEALAENGKVIVTGCLGAKKSASGSGLIAEVHPKVLAVTGPHAVGEVMQAVHSHLPKPHDPFVDLVPAAGIKLTPRHYAYLKISEGCNHRCSFCIIPSMRGELVSRPVAEVMLEAENLFKSGVKELLVISQDTSAYGVDVKYRTGFWNGRPLKTRMTELVGALGELAAQYGAWVRLHYVYPYPHVDEIIPMMAQGPLKGHVLPYLDVPFQHAHPEVLKRMKRPANAERVLERVQKWREICPDLTIRSTFIAGFPGETDAQFETLLDFIREAELDRVGCFAYSPVEGASANALDGALPDDVREARRARFMEVAEEVSAARIARKVGKTLKVLIDEVNAEGGIGRTAADAPEIDGVVYVEPAAKASKRYKVGEFVSVKITGADGHDLWGEV.

The MTTase N-terminal domain maps to 11-126 (PKVGMVSLGC…VMQAVHSHLP (116 aa)). Residues Cys20, Cys56, Cys85, Cys157, Cys161, and Cys164 each contribute to the [4Fe-4S] cluster site. Residues 143–388 (LTPRHYAYLK…MEVAEEVSAA (246 aa)) enclose the Radical SAM core domain. One can recognise a TRAM domain in the interval 391 to 459 (ARKVGKTLKV…ADGHDLWGEV (69 aa)).

It belongs to the methylthiotransferase family. RimO subfamily. [4Fe-4S] cluster serves as cofactor.

It is found in the cytoplasm. It carries out the reaction L-aspartate(89)-[ribosomal protein uS12]-hydrogen + (sulfur carrier)-SH + AH2 + 2 S-adenosyl-L-methionine = 3-methylsulfanyl-L-aspartate(89)-[ribosomal protein uS12]-hydrogen + (sulfur carrier)-H + 5'-deoxyadenosine + L-methionine + A + S-adenosyl-L-homocysteine + 2 H(+). Functionally, catalyzes the methylthiolation of an aspartic acid residue of ribosomal protein uS12. The polypeptide is Ribosomal protein uS12 methylthiotransferase RimO (Burkholderia pseudomallei (strain K96243)).